Reading from the N-terminus, the 496-residue chain is Aspartyl/glutamyl-tRNA(Asn/Gln) amidotransferase subunit B (496 aa).

The tract at residues 475–496 (TGGSADPSKVNTLLREQLEDKK) is disordered.

It belongs to the GatB/GatE family. GatB subfamily. Heterotrimer of A, B and C subunits.

It carries out the reaction L-glutamyl-tRNA(Gln) + L-glutamine + ATP + H2O = L-glutaminyl-tRNA(Gln) + L-glutamate + ADP + phosphate + H(+). It catalyses the reaction L-aspartyl-tRNA(Asn) + L-glutamine + ATP + H2O = L-asparaginyl-tRNA(Asn) + L-glutamate + ADP + phosphate + 2 H(+). Its function is as follows. Allows the formation of correctly charged Asn-tRNA(Asn) or Gln-tRNA(Gln) through the transamidation of misacylated Asp-tRNA(Asn) or Glu-tRNA(Gln) in organisms which lack either or both of asparaginyl-tRNA or glutaminyl-tRNA synthetases. The reaction takes place in the presence of glutamine and ATP through an activated phospho-Asp-tRNA(Asn) or phospho-Glu-tRNA(Gln). The polypeptide is Aspartyl/glutamyl-tRNA(Asn/Gln) amidotransferase subunit B (Haloquadratum walsbyi (strain DSM 16790 / HBSQ001)).